A 102-amino-acid chain; its full sequence is NADH-quinone oxidoreductase subunit K (102 aa).

Helical transmembrane passes span 4–24, 31–51, and 65–85; these read IGLN…LVGV, LMLF…FAAI, and FFVI…LIVW.

The protein belongs to the complex I subunit 4L family. In terms of assembly, NDH-1 is composed of 14 different subunits. Subunits NuoA, H, J, K, L, M, N constitute the membrane sector of the complex.

Its subcellular location is the cell inner membrane. It catalyses the reaction a quinone + NADH + 5 H(+)(in) = a quinol + NAD(+) + 4 H(+)(out). NDH-1 shuttles electrons from NADH, via FMN and iron-sulfur (Fe-S) centers, to quinones in the respiratory chain. The immediate electron acceptor for the enzyme in this species is believed to be ubiquinone. Couples the redox reaction to proton translocation (for every two electrons transferred, four hydrogen ions are translocated across the cytoplasmic membrane), and thus conserves the redox energy in a proton gradient. The chain is NADH-quinone oxidoreductase subunit K from Sulfurimonas denitrificans (strain ATCC 33889 / DSM 1251) (Thiomicrospira denitrificans (strain ATCC 33889 / DSM 1251)).